Reading from the N-terminus, the 63-residue chain is MSDVTVVSCPTCGKPVVWGEVSPFRPFCSKRCQLIDLGEWAAEEKRIASSGDLSDSDDWSEER.

Positions 9, 12, 28, and 32 each coordinate Zn(2+).

The protein belongs to the DNA gyrase inhibitor YacG family. Interacts with GyrB. Requires Zn(2+) as cofactor.

Functionally, inhibits all the catalytic activities of DNA gyrase by preventing its interaction with DNA. Acts by binding directly to the C-terminal domain of GyrB, which probably disrupts DNA binding by the gyrase. The polypeptide is DNA gyrase inhibitor YacG (Salmonella arizonae (strain ATCC BAA-731 / CDC346-86 / RSK2980)).